The following is a 660-amino-acid chain: Probable E3 ubiquitin ligase complex SCF subunit sconB (660 aa).

Residues 1-13 (MHNENSVLRDAKE) show a composition bias toward basic and acidic residues. Disordered regions lie at residues 1–34 (MHNE…MTPY) and 86–108 (LGTG…RRQA). The 47-residue stretch at 175-221 (IDFITALPPEISFKILSYLDTASLCRAAQVSRGWKCLADDDVVWHRM) folds into the F-box domain. 7 WD repeats span residues 340–379 (GHTN…RTLT), 381–419 (HTSG…STYT), 421–457 (HLGG…TFLL), 459–500 (GHSD…RTFQ), 542–586 (SQVS…CLRT), 587–626 (FFGH…CERT), and 629–660 (GHSG…SFKN). The interval 521-553 (GHDASHEEDSNASVSGDESPSSQVSCSPTAAFF) is disordered. Residues 531 to 548 (NASVSGDESPSSQVSCSP) show a composition bias toward polar residues.

It belongs to the WD repeat MET30/SCONB/SCON-2 family. As to quaternary structure, component of the SCF(sconB) E3 ubiquitin ligase complex.

It functions in the pathway protein modification; protein ubiquitination. In terms of biological role, component of the SCF(sconB) E3 ubiquitin ligase complex involved in the regulation of sulfur metabolite repression, probably by mediating the inactivation or degradation of the metR transcription factor. This is Probable E3 ubiquitin ligase complex SCF subunit sconB (sconB) from Talaromyces marneffei (strain ATCC 18224 / CBS 334.59 / QM 7333) (Penicillium marneffei).